Here is a 355-residue protein sequence, read N- to C-terminus: Ubiquinone biosynthesis protein COQ4 homolog, mitochondrial (355 aa).

Zn(2+) contacts are provided by H134, D135, H138, and E150.

Belongs to the COQ4 family. Component of a multi-subunit COQ enzyme complex. Requires Zn(2+) as cofactor.

It is found in the mitochondrion inner membrane. It catalyses the reaction a 4-hydroxy-3-methoxy-5-(all-trans-polyprenyl)benzoate + H(+) = a 2-methoxy-6-(all-trans-polyprenyl)phenol + CO2. Its pathway is cofactor biosynthesis; ubiquinone biosynthesis. Its function is as follows. Lyase that catalyzes the C1-decarboxylation of 4-hydroxy-3-methoxy-5-(all-trans-polyprenyl)benzoic acid into 2-methoxy-6-(all-trans-polyprenyl)phenol during ubiquinone biosynthesis. The protein is Ubiquinone biosynthesis protein COQ4 homolog, mitochondrial of Plasmodium falciparum (isolate 3D7).